The primary structure comprises 355 residues: WD repeat domain phosphoinositide-interacting protein 4 (355 aa).

WD repeat units follow at residues 2–40 (SQQR…EKGH) and 185–225 (AHQS…QLVE). The short motif at 226-229 (LRRG) is the L/FRRG motif element. Residues 230–269 (TDPATLYCINFSHDSSFLCSSSDKGTVHIFALKDTKLNRR) form a WD 3 repeat.

Belongs to the WD repeat PROPPIN family.

It is found in the preautophagosomal structure. Component of the autophagy machinery that controls the major intracellular degradation process by which cytoplasmic materials are packaged into autophagosomes and delivered to lysosomes for degradation. Binds phosphatidylinositol 3-phosphate (PtdIns3P). The chain is WD repeat domain phosphoinositide-interacting protein 4 (wdr45) from Xenopus laevis (African clawed frog).